A 199-amino-acid polypeptide reads, in one-letter code: MTVKLVLASKSPFRSALLKNAGIEFSTASADIDERAVEAPLYESGATPEDVAQILAEAKAIDVSEKNPGAVVIGCDQTLSLGDEIFHKPHDMEAARRQLQKFSGKTHQLNSAVVLARDGKTLWRHVSIAHMTMRDLDAGFIGRYLGRVGDIALSSVGAYQVEGPGIQLFEKIDGDYFTIVGLPLLPLLAELRREKCIDG.

The active-site Proton acceptor is D76.

This sequence belongs to the Maf family. YceF subfamily. A divalent metal cation serves as cofactor.

It is found in the cytoplasm. The catalysed reaction is N(7)-methyl-GTP + H2O = N(7)-methyl-GMP + diphosphate + H(+). Nucleoside triphosphate pyrophosphatase that hydrolyzes 7-methyl-GTP (m(7)GTP). May have a dual role in cell division arrest and in preventing the incorporation of modified nucleotides into cellular nucleic acids. The protein is 7-methyl-GTP pyrophosphatase (maf-2) of Brucella suis biovar 1 (strain 1330).